The chain runs to 4518 residues: Dynein axonemal heavy chain 11 (4518 aa).

The interval 1-1857 is stem; the sequence is MAASVAAQEA…LVHICDAQFQ (1857 aa). AAA regions lie at residues 1858-2079, 2139-2368, 2474-2721, and 2819-3068; these read YFYE…VLVV, QMVR…TSFK, TMDP…VFQG, and NYND…EGRH. Residues 1896–1903, 2177–2184, 2512–2519, and 2857–2864 each bind ATP; these read GPAGTGKT, GNAGTGKS, GNAGVGKT, and GVGGSGKQ. The segment at 3074 to 3405 is stalk; that stretch reads KSFLEQISLF…GQSIKSFEAQ (332 aa). Residues 3322–3391 adopt a coiled-coil conformation; it reads LAQANLELAT…NRLVKELEVK (70 aa). AAA regions lie at residues 3461–3688 and 3898–4124; these read LTDD…EIER and LRNF…VLYN.

It belongs to the dynein heavy chain family. Consists of at least two heavy chains and a number of intermediate and light chains. Interacts with CFAP45.

It is found in the cytoplasm. The protein localises to the cytoskeleton. Its subcellular location is the cilium axoneme. Force generating protein of respiratory cilia. Produces force towards the minus ends of microtubules. Dynein has ATPase activity; the force-producing power stroke is thought to occur on release of ADP. In Sus scrofa (Pig), this protein is Dynein axonemal heavy chain 11 (DNAH11).